Here is a 500-residue protein sequence, read N- to C-terminus: L-arabinose isomerase (500 aa).

Residues Glu306, Glu333, His350, and His450 each coordinate Mn(2+).

The protein belongs to the arabinose isomerase family. In terms of assembly, homohexamer. The cofactor is Mn(2+).

The catalysed reaction is beta-L-arabinopyranose = L-ribulose. It participates in carbohydrate degradation; L-arabinose degradation via L-ribulose; D-xylulose 5-phosphate from L-arabinose (bacterial route): step 1/3. In terms of biological role, catalyzes the conversion of L-arabinose to L-ribulose. The sequence is that of L-arabinose isomerase from Shigella boydii serotype 18 (strain CDC 3083-94 / BS512).